Here is a 155-residue protein sequence, read N- to C-terminus: Arginine repressor (155 aa).

It belongs to the ArgR family.

The protein resides in the cytoplasm. Its pathway is amino-acid biosynthesis; L-arginine biosynthesis [regulation]. Functionally, regulates arginine biosynthesis genes. In Histophilus somni (strain 129Pt) (Haemophilus somnus), this protein is Arginine repressor.